Here is a 109-residue protein sequence, read N- to C-terminus: MLALYTLGLFILTAVTEIVGCYLPYLWLKKSAPGWVLLPAAASLAMFAWLLSLHPTDAGRVYAAYGGVYVFVALLWLWGVEGVRPHPWDFVGVAVALAGMGIIMFAPRG.

4 helical membrane-spanning segments follow: residues 1–21 (MLALYTLGLFILTAVTEIVGC), 33–53 (PGWVLLPAAASLAMFAWLLSL), 63–83 (AAYGGVYVFVALLWLWGVEGV), and 87–107 (PWDFVGVAVALAGMGIIMFAP).

This sequence belongs to the UPF0060 family.

The protein resides in the cell inner membrane. The sequence is that of UPF0060 membrane protein ABO_1373 from Alcanivorax borkumensis (strain ATCC 700651 / DSM 11573 / NCIMB 13689 / SK2).